A 1133-amino-acid chain; its full sequence is Probable cation-transporting ATPase 9 (1133 aa).

Topologically, residues 1–6 (MRVSSI) are cytoplasmic. The chain crosses the membrane as a helical span at residues 7–28 (EAEMENPIDVDKTDVEGELKIK). At 29-34 (QVTLLR) the chain is on the extracellular side. The chain crosses the membrane as a helical span at residues 35-53 (ENIVKKIVFFLVAIFCSDR). The Cytoplasmic segment spans residues 54-167 (PSVLKKVFYE…IEINVPSFLT (114 aa)). The helical transmembrane segment at 168-190 (LMWREFKKPINFLLYFGIIVWGI) threads the bilayer. Residues 191-193 (EQM) are Extracellular-facing. Residues 194–212 (YVSTAITVVFTTTINSLIC) form a helical membrane-spanning segment. Over 213–363 (IYIRGVMQKL…PFNKKFQQQA (151 aa)) the chain is Cytoplasmic. The chain crosses the membrane as a helical span at residues 364–383 (VKLTILMATLLLIGFLSTLS). Residues 384-396 (RLLDIELPPLFIA) lie on the Extracellular side of the membrane. Residues 397 to 418 (FRFLDILIYSAPPGMPMLIAIT) traverse the membrane as a helical segment. Residues 419 to 887 (NFVGLKRLKN…NSVEIFKGYL (469 aa)) lie on the Cytoplasmic side of the membrane. The 4-aspartylphosphate intermediate role is filled by D451. Residues D827 and D831 each contribute to the Mg(2+) site. A helical transmembrane segment spans residues 888 to 906 (QVALLRYLGFLTLAYFYSS). Topologically, residues 907-915 (YSSGQMDWQ) are extracellular. Residues 916-931 (ALASGYFLVYLILGCN) form a helical membrane-spanning segment. Residues 932–948 (TPLKKLEKSVFDDNLFS) are Cytoplasmic-facing. A helical transmembrane segment spans residues 949–972 (IYNVTSVLFGFTLHILSIVGCVES). The Extracellular segment spans residues 973-994 (LHASPIYKEVNSLDAENNFQFE). Residues 995–1018 (TQHNTVLNFNILINFFYVIISNHI) form a helical membrane-spanning segment. Topologically, residues 1019–1030 (GKPMKDRYYKNT) are cytoplasmic. Residues 1031-1050 (IAIYYDLGLIYTCKCMILQV) form a helical membrane-spanning segment. The Extracellular portion of the chain corresponds to 1051–1101 (LLILEHTHHGLIFLILLLDQEFSSSLTVQVYFSLPMNLFLPEEFSLNFTQE). The helical transmembrane segment at 1102–1124 (VKKEKELLICNSSSTILEVDYNL) threads the bilayer. The Cytoplasmic segment spans residues 1125–1133 (RLNYFQQNF).

The protein belongs to the cation transport ATPase (P-type) (TC 3.A.3) family. Type V subfamily.

It localises to the membrane. It carries out the reaction ATP + H2O = ADP + phosphate + H(+). This Tetrahymena thermophila protein is Probable cation-transporting ATPase 9 (TPA9).